Here is a 222-residue protein sequence, read N- to C-terminus: Glutathione S-transferase 3 (222 aa).

The GST N-terminal domain maps to 2–83 (APLKLYGMPL…YIASKYASEG (82 aa)). Glutathione contacts are provided by residues S12, 13 to 14 (PN), 41 to 42 (HK), 54 to 55 (QI), and 67 to 68 (ES). Residues 89–219 (ATASAAKLEV…AAIPLPPPPS (131 aa)) enclose the GST C-terminal domain.

Belongs to the GST superfamily. Phi family. In terms of assembly, homodimer.

The enzyme catalyses RX + glutathione = an S-substituted glutathione + a halide anion + H(+). In terms of biological role, conjugation of reduced glutathione to a wide number of exogenous and endogenous hydrophobic electrophiles. Involved in the detoxification of certain herbicides. This chain is Glutathione S-transferase 3, found in Zea mays (Maize).